The following is a 299-amino-acid chain: Pyridoxal 5'-phosphate synthase subunit PdxS (299 aa).

Asp-24 provides a ligand contact to D-ribose 5-phosphate. Residue Lys-81 is the Schiff-base intermediate with D-ribose 5-phosphate of the active site. Gly-153 is a D-ribose 5-phosphate binding site. Residue Arg-165 coordinates D-glyceraldehyde 3-phosphate. D-ribose 5-phosphate contacts are provided by residues Gly-219 and 240 to 241 (GS).

This sequence belongs to the PdxS/SNZ family. In terms of assembly, in the presence of PdxT, forms a dodecamer of heterodimers.

It carries out the reaction aldehydo-D-ribose 5-phosphate + D-glyceraldehyde 3-phosphate + L-glutamine = pyridoxal 5'-phosphate + L-glutamate + phosphate + 3 H2O + H(+). The protein operates within cofactor biosynthesis; pyridoxal 5'-phosphate biosynthesis. Functionally, catalyzes the formation of pyridoxal 5'-phosphate from ribose 5-phosphate (RBP), glyceraldehyde 3-phosphate (G3P) and ammonia. The ammonia is provided by the PdxT subunit. Can also use ribulose 5-phosphate and dihydroxyacetone phosphate as substrates, resulting from enzyme-catalyzed isomerization of RBP and G3P, respectively. This chain is Pyridoxal 5'-phosphate synthase subunit PdxS, found in Methanococcus vannielii (strain ATCC 35089 / DSM 1224 / JCM 13029 / OCM 148 / SB).